We begin with the raw amino-acid sequence, 580 residues long: E3 ubiquitin-protein ligase TRIM45 (580 aa).

Residues Cys-29–Asp-98 form an RING-type zinc finger. 2 B box-type zinc fingers span residues Gly-130–Leu-176 and Gly-186–Thr-227. The Zn(2+) site is built by Cys-135, Cys-138, Cys-158, His-162, Cys-191, His-194, Cys-214, and His-219. A coiled-coil region spans residues Ser-281–Leu-335. The Filamin repeat unit spans residues Thr-394–Val-497.

The protein belongs to the TRIM/RBCC family.

The protein localises to the cytoplasm. It localises to the nucleus. It catalyses the reaction S-ubiquitinyl-[E2 ubiquitin-conjugating enzyme]-L-cysteine + [acceptor protein]-L-lysine = [E2 ubiquitin-conjugating enzyme]-L-cysteine + N(6)-ubiquitinyl-[acceptor protein]-L-lysine.. In terms of biological role, E3 ubiquitin-protein ligase that plays a role in the regulation of inflammatory response. Mechanistically, mediates the 'Lys-48'-linked polyubiquitination of TAB2, a regulatory protein of the kinase TAK1, leading to its degradation via the proteasomal pathway and inhibition of the TLR-mediated inflammatory immune response. May act as a transcriptional repressor in mitogen-activated protein kinase signaling pathway. The protein is E3 ubiquitin-protein ligase TRIM45 (TRIM45) of Bos taurus (Bovine).